Here is a 500-residue protein sequence, read N- to C-terminus: Aspartyl/glutamyl-tRNA(Asn/Gln) amidotransferase subunit B (500 aa).

The protein belongs to the GatB/GatE family. GatB subfamily. In terms of assembly, heterotrimer of A, B and C subunits.

It catalyses the reaction L-glutamyl-tRNA(Gln) + L-glutamine + ATP + H2O = L-glutaminyl-tRNA(Gln) + L-glutamate + ADP + phosphate + H(+). It carries out the reaction L-aspartyl-tRNA(Asn) + L-glutamine + ATP + H2O = L-asparaginyl-tRNA(Asn) + L-glutamate + ADP + phosphate + 2 H(+). Allows the formation of correctly charged Asn-tRNA(Asn) or Gln-tRNA(Gln) through the transamidation of misacylated Asp-tRNA(Asn) or Glu-tRNA(Gln) in organisms which lack either or both of asparaginyl-tRNA or glutaminyl-tRNA synthetases. The reaction takes place in the presence of glutamine and ATP through an activated phospho-Asp-tRNA(Asn) or phospho-Glu-tRNA(Gln). In Rhizobium meliloti (strain 1021) (Ensifer meliloti), this protein is Aspartyl/glutamyl-tRNA(Asn/Gln) amidotransferase subunit B.